The following is a 317-amino-acid chain: Probable cell division protein WhiA (317 aa).

A DNA-binding region (H-T-H motif) is located at residues 281–314; the sequence is TLKELGEMINPPIGKSGVNHRLRKLDQIADRERG.

Belongs to the WhiA family.

Involved in cell division and chromosome segregation. The polypeptide is Probable cell division protein WhiA (Alkaliphilus metalliredigens (strain QYMF)).